The chain runs to 298 residues: Inosose dehydratase (298 aa).

The protein belongs to the IolE/MocC family. Glutathione serves as cofactor. The cofactor is Co(2+). Mn(2+) is required as a cofactor.

It catalyses the reaction scyllo-inosose = 3D-3,5/4-trihydroxycyclohexane-1,2-dione + H2O. It functions in the pathway polyol metabolism; myo-inositol degradation into acetyl-CoA; acetyl-CoA from myo-inositol: step 2/7. In terms of biological role, catalyzes the dehydration of inosose (2-keto-myo-inositol, 2KMI or 2,4,6/3,5-pentahydroxycyclohexanone) to 3D-(3,5/4)-trihydroxycyclohexane-1,2-dione (D-2,3-diketo-4-deoxy-epi-inositol). The polypeptide is Inosose dehydratase (Lacticaseibacillus casei (Lactobacillus casei)).